Consider the following 402-residue polypeptide: Argininosuccinate synthase (402 aa).

Position 8 to 16 (8 to 16) interacts with ATP; that stretch reads AYSGGLDTS. L-citrulline contacts are provided by tyrosine 86 and serine 91. Residue glycine 116 participates in ATP binding. Residues threonine 118, asparagine 122, and aspartate 123 each contribute to the L-aspartate site. Residue asparagine 122 coordinates L-citrulline. L-citrulline contacts are provided by arginine 126, serine 175, serine 184, glutamate 260, and tyrosine 272.

This sequence belongs to the argininosuccinate synthase family. Type 1 subfamily. In terms of assembly, homotetramer.

The protein localises to the cytoplasm. It catalyses the reaction L-citrulline + L-aspartate + ATP = 2-(N(omega)-L-arginino)succinate + AMP + diphosphate + H(+). It participates in amino-acid biosynthesis; L-arginine biosynthesis; L-arginine from L-ornithine and carbamoyl phosphate: step 2/3. The chain is Argininosuccinate synthase from Clostridium novyi (strain NT).